A 50-amino-acid polypeptide reads, in one-letter code: Sperm protamine P1 (50 aa).

It belongs to the protamine P1 family. Testis.

The protein resides in the nucleus. The protein localises to the chromosome. Functionally, protamines substitute for histones in the chromatin of sperm during the haploid phase of spermatogenesis. They compact sperm DNA into a highly condensed, stable and inactive complex. This chain is Sperm protamine P1 (PRM1), found in Trachypithecus vetulus (Purple-faced langur).